Here is a 168-residue protein sequence, read N- to C-terminus: Small ribosomal subunit protein bS16 (168 aa).

Residues 110–168 (LAEAEGGPSNEATQPKKKKAPAKKAASDIEATADPAGNADKSEPAAEGEDATVAGATEG) are disordered.

Belongs to the bacterial ribosomal protein bS16 family.

This Mycobacterium sp. (strain JLS) protein is Small ribosomal subunit protein bS16.